Reading from the N-terminus, the 404-residue chain is Photosynthetic reaction center cytochrome c subunit (404 aa).

An N-terminal signal peptide occupies residues 1 to 22 (MSPAQQLTLPAVIVVASVMLLG). Residue cysteine 23 is the site of N-palmitoyl cysteine attachment. Cysteine 23 carries S-diacylglycerol cysteine lipidation. Residues methionine 94, cysteine 107, cysteine 110, histidine 111, methionine 130, histidine 144, cysteine 152, cysteine 155, histidine 156, methionine 236, cysteine 247, cysteine 250, histidine 251, cysteine 307, cysteine 310, and histidine 311 each contribute to the heme site. Positions 346–404 (ASEAAPAAATEAAPEAPAQEVPAAEAVPAAAEPGAAEAAGSVEPAPVEEVAPAPAAQRL) are disordered.

In terms of assembly, component of the photosynthetic reaction center composed of protein subunits L (PufL), M (PufM), H (PuhA) and cytochrome C (PufC). The reaction center interacts with light-harvesting antenna complex LH1. Binds 4 heme groups per subunit.

The protein resides in the cellular chromatophore membrane. Functionally, the reaction center of purple bacteria contains a tightly bound cytochrome molecule which re-reduces the photo oxidized primary electron donor. The chain is Photosynthetic reaction center cytochrome c subunit from Thermochromatium tepidum (Chromatium tepidum).